Here is a 265-residue protein sequence, read N- to C-terminus: Biogenesis of lysosome-related organelles complex 1 subunit KXD1 (265 aa).

Disordered regions lie at residues 1-63 and 79-111; these read MSSD…DADV and DRLIIGSGDDSDNGDGDEVHDNAHATSDVSSTA. Polar residues predominate over residues 14-27; sequence QLVSQSPSINSQTY. The span at 52–63 shows a compositional bias: acidic residues; that stretch reads DDEDEEDDDADV. Residues 102–111 are compositionally biased toward polar residues; that stretch reads HATSDVSSTA. Positions 196 to 245 form a coiled coil; that stretch reads ELKQLINMSKDRLVDLQDKFEKGVQTSNRIKRNLKMSREKIQFLNDEFRT.

Belongs to the KXD1 family. As to quaternary structure, component of the biogenesis of lysosome-related organelles complex-1 (BLOC-1).

It localises to the endosome. Functionally, component of the biogenesis of lysosome-related organelles complex-1 (BLOC-1) involved in endosomal cargo sorting. The polypeptide is Biogenesis of lysosome-related organelles complex 1 subunit KXD1 (KXD1) (Vanderwaltozyma polyspora (strain ATCC 22028 / DSM 70294 / BCRC 21397 / CBS 2163 / NBRC 10782 / NRRL Y-8283 / UCD 57-17) (Kluyveromyces polysporus)).